Reading from the N-terminus, the 77-residue chain is Acyl carrier protein (77 aa).

The Carrier domain maps to 2-77 (SDVAERVKKI…DAIDFITANS (76 aa)). Serine 37 carries the post-translational modification O-(pantetheine 4'-phosphoryl)serine.

Belongs to the acyl carrier protein (ACP) family. 4'-phosphopantetheine is transferred from CoA to a specific serine of apo-ACP by AcpS. This modification is essential for activity because fatty acids are bound in thioester linkage to the sulfhydryl of the prosthetic group.

It localises to the cytoplasm. It functions in the pathway lipid metabolism; fatty acid biosynthesis. Functionally, carrier of the growing fatty acid chain in fatty acid biosynthesis. This Paramagnetospirillum magneticum (strain ATCC 700264 / AMB-1) (Magnetospirillum magneticum) protein is Acyl carrier protein.